Reading from the N-terminus, the 576-residue chain is Chaperonin CPN60-2, mitochondrial (576 aa).

A mitochondrion-targeting transit peptide spans 1–34; sequence MYRAAASLASKARQAGSSSAARQVGSRLAWSRNY.

The protein belongs to the chaperonin (HSP60) family.

It is found in the mitochondrion. Its function is as follows. Implicated in mitochondrial protein import and macromolecular assembly. May facilitate the correct folding of imported proteins. May also prevent misfolding and promote the refolding and proper assembly of unfolded polypeptides generated under stress conditions in the mitochondrial matrix. The sequence is that of Chaperonin CPN60-2, mitochondrial (CPN60II) from Zea mays (Maize).